Consider the following 55-residue polypeptide: Large ribosomal subunit protein bL32 (55 aa).

The segment covering 1 to 19 has biased composition (basic residues); the sequence is MAVPKRRMSRANTHTRRSQ. The tract at residues 1–21 is disordered; the sequence is MAVPKRRMSRANTHTRRSQWK.

Belongs to the bacterial ribosomal protein bL32 family.

The chain is Large ribosomal subunit protein bL32 from Corynebacterium kroppenstedtii (strain DSM 44385 / JCM 11950 / CIP 105744 / CCUG 35717).